We begin with the raw amino-acid sequence, 250 residues long: Manganese transport system ATP-binding protein MntB (250 aa).

The ABC transporter domain occupies 5-236 (VKVDNLSVFY…MVAKTYQGNL (232 aa)). 37–44 (GPNGAGKS) provides a ligand contact to ATP.

The protein belongs to the ABC transporter superfamily.

It localises to the cell membrane. This protein is probably a component of a manganese permease, a binding protein-dependent, ATP-driven transport system. Probably responsible for energy coupling to the transport system. This is Manganese transport system ATP-binding protein MntB (mntB) from Halalkalibacterium halodurans (strain ATCC BAA-125 / DSM 18197 / FERM 7344 / JCM 9153 / C-125) (Bacillus halodurans).